We begin with the raw amino-acid sequence, 254 residues long: Kallikrein-4 (254 aa).

The N-terminal stretch at 1–26 (MATAGNPWGWFLGYLILGVAGSLVSG) is a signal peptide. A propeptide spanning residues 27-30 (SCSQ) is cleaved from the precursor. Residues 31 to 252 (IINGEDCSPH…FTEWIEKTVQ (222 aa)) form the Peptidase S1 domain. Cystine bridges form between cysteine 37–cysteine 167, cysteine 56–cysteine 72, cysteine 141–cysteine 241, cysteine 148–cysteine 213, cysteine 178–cysteine 192, and cysteine 203–cysteine 228. Histidine 40 contributes to the Zn(2+) binding site. The active-site Charge relay system is the histidine 71. Glutamate 91 serves as a coordination point for Zn(2+). Residue aspartate 116 is the Charge relay system of the active site. Asparagine 169 carries N-linked (GlcNAc...) asparagine glycosylation. Residue serine 207 is the Charge relay system of the active site.

Belongs to the peptidase S1 family. Kallikrein subfamily. In terms of processing, N-glycosylated. The N-glycan structures are of complex diantennary or triantennary type, which may be further modified with up to 2 sialic acid residues. Expressed in prostate.

The protein resides in the secreted. Its function is as follows. Has a major role in enamel formation. Required during the maturation stage of tooth development for clearance of enamel proteins and normal structural patterning of the crystalline matrix. The protein is Kallikrein-4 (KLK4) of Homo sapiens (Human).